The following is a 141-amino-acid chain: Hemoglobin subunit alpha-A (141 aa).

Residues 1–141 (VLSAADKNNV…VGTVLTAKYR (141 aa)) form the Globin domain. His58 is a binding site for O2. His87 serves as a coordination point for heme b.

The protein belongs to the globin family. As to quaternary structure, heterotetramer of two alpha chains and two beta chains. Red blood cells.

In terms of biological role, involved in oxygen transport from the lung to the various peripheral tissues. In Phasianus colchicus colchicus (Black-necked pheasant), this protein is Hemoglobin subunit alpha-A (HBAA).